A 551-amino-acid chain; its full sequence is mRNA cap guanine-N(7) methyltransferase (551 aa).

A compositionally biased stretch (polar residues) spans 1 to 10 (MENRSSSGTP). Residues 1–152 (MENRSSSGTP…DRETLRRRQE (152 aa)) form a disordered region. Composition is skewed to basic and acidic residues over residues 48–76 (VTEEGEASEKSEPPADRPMSKRKRMEERH) and 141–152 (LVDRETLRRRQE). The mRNA cap 0 methyltransferase domain maps to 194–551 (SKIKGLRSFN…FYHAFCFYKV (358 aa)). Residue 203–204 (NN) participates in mRNA binding. S-adenosyl-L-methionine-binding positions include Lys-207, Gly-250, Asp-274, Asp-312, 355–357 (MFA), and Tyr-360. Residues 407–430 (KAREEQEKKEKSDEAPEDGEVEED) are disordered. The span at 408 to 420 (AREEQEKKEKSDE) shows a compositional bias: basic and acidic residues. The span at 421 to 430 (APEDGEVEED) shows a compositional bias: acidic residues.

This sequence belongs to the class I-like SAM-binding methyltransferase superfamily. mRNA cap 0 methyltransferase family.

The protein localises to the nucleus. The catalysed reaction is a 5'-end (5'-triphosphoguanosine)-ribonucleoside in mRNA + S-adenosyl-L-methionine = a 5'-end (N(7)-methyl 5'-triphosphoguanosine)-ribonucleoside in mRNA + S-adenosyl-L-homocysteine. Its function is as follows. Responsible for methylating the 5'-cap structure of mRNAs. The polypeptide is mRNA cap guanine-N(7) methyltransferase (abd1) (Aspergillus clavatus (strain ATCC 1007 / CBS 513.65 / DSM 816 / NCTC 3887 / NRRL 1 / QM 1276 / 107)).